The sequence spans 707 residues: Alpha-hemolysin translocation ATP-binding protein HlyB (707 aa).

Residues serine 3–isoleucine 125 form the Peptidase C39 domain. Histidine 83 is a catalytic residue. In terms of domain architecture, ABC transmembrane type-1 spans phenylalanine 154–glutamine 436. A run of 5 helical transmembrane segments spans residues leucine 158–valine 178, leucine 191–leucine 211, alanine 269–tyrosine 289, leucine 295–leucine 315, and valine 388–glycine 408. An ABC transporter domain is found at isoleucine 468–glutamine 703. Glycine 502–serine 509 is an ATP binding site.

This sequence belongs to the ABC transporter superfamily. Protein-1 exporter (TC 3.A.1.109) family. As to quaternary structure, homodimer.

It is found in the cell inner membrane. Part of the ABC transporter complex HlyBD involved in hemolysin export. Transmembrane domains (TMD) form a pore in the inner membrane and the ATP-binding domain (NBD) is responsible for energy generation. The chain is Alpha-hemolysin translocation ATP-binding protein HlyB (hlyB) from Escherichia coli.